Consider the following 190-residue polypeptide: ADP-ribosylation factor-like protein 6 (190 aa).

A lipid anchor (N-myristoyl glycine) is attached at glycine 2. GTP is bound by residues 24–31, threonine 50, 69–73, glycine 72, 130–133, and alanine 164; these read GLDNSGKT, DMAGQ, and NKMD. Positions 31 and 50 each coordinate Mg(2+).

This sequence belongs to the small GTPase superfamily. Arf family.

It localises to the cytoplasm. The polypeptide is ADP-ribosylation factor-like protein 6 (Caenorhabditis briggsae).